The following is a 502-amino-acid chain: Glutamate--tRNA ligase (502 aa).

A 'HIGH' region motif is present at residues 12–22 (PSPTGYLHVGG). A 'KMSKS' region motif is present at residues 259–263 (KLSKR). K262 provides a ligand contact to ATP.

Belongs to the class-I aminoacyl-tRNA synthetase family. Glutamate--tRNA ligase type 1 subfamily. Monomer.

Its subcellular location is the cytoplasm. It catalyses the reaction tRNA(Glu) + L-glutamate + ATP = L-glutamyl-tRNA(Glu) + AMP + diphosphate. Catalyzes the attachment of glutamate to tRNA(Glu) in a two-step reaction: glutamate is first activated by ATP to form Glu-AMP and then transferred to the acceptor end of tRNA(Glu). The protein is Glutamate--tRNA ligase of Chlorobium phaeobacteroides (strain DSM 266 / SMG 266 / 2430).